Here is a 100-residue protein sequence, read N- to C-terminus: MFNRNLRAVILKNYNKALTRCLHDAGNLKRPTPPRLPKEQQEEWDRLQKESSKRPVDVMRREKHKDFEGDVNPKTGEIGGPKSEPTVHGDYSYEGRVTDF.

A mitochondrion-targeting transit peptide spans 1-31 (MFNRNLRAVILKNYNKALTRCLHDAGNLKRP). Positions 24–100 (DAGNLKRPTP…YSYEGRVTDF (77 aa)) are disordered. Composition is skewed to basic and acidic residues over residues 36 to 68 (LPKE…KDFE) and 85 to 100 (PTVH…VTDF).

It belongs to the SDHAF4 family. Interacts with sdh1 in its FAD-bound form.

The protein resides in the mitochondrion matrix. In terms of biological role, plays an essential role in the assembly of succinate dehydrogenase (SDH), an enzyme complex (also referred to as respiratory complex II) that is a component of both the tricarboxylic acid (TCA) cycle and the mitochondrial electron transport chain, and which couples the oxidation of succinate to fumarate with the reduction of ubiquinone (coenzyme Q) to ubiquinol. Binds to the flavoprotein subunit sdh1 in its FAD-bound form, blocking the generation of excess reactive oxygen species (ROS) and facilitating its assembly with the iron-sulfur protein subunit sdh2 into the SDH catalytic dimer. The protein is Succinate dehydrogenase assembly factor 4, mitochondrial of Schizosaccharomyces pombe (strain 972 / ATCC 24843) (Fission yeast).